The chain runs to 295 residues: Iron-sulfur cluster carrier protein (295 aa).

Residue 38–45 (GKGGVGKS) coordinates ATP.

Belongs to the Mrp/NBP35 ATP-binding proteins family. As to quaternary structure, homodimer.

Its function is as follows. Binds and transfers iron-sulfur (Fe-S) clusters to target apoproteins. Can hydrolyze ATP. The polypeptide is Iron-sulfur cluster carrier protein (Pyrococcus horikoshii (strain ATCC 700860 / DSM 12428 / JCM 9974 / NBRC 100139 / OT-3)).